A 332-amino-acid polypeptide reads, in one-letter code: Melanocortin receptor 4 (332 aa).

Residues 1–43 (MNSTHHHGMHTSLHFWNRSTYGLHSNASEPLGKGYSEGGCYEQ) lie on the Extracellular side of the membrane. N-linked (GlcNAc...) asparagine glycans are attached at residues Asn-2, Asn-17, and Asn-26. Intrachain disulfides connect Cys-40/Cys-279 and Cys-271/Cys-277. The chain crosses the membrane as a helical span at residues 44–69 (LFVSPEVFVTLGVISLLENILVIVAI). Residues 70–81 (AKNKNLHSPMYF) lie on the Cytoplasmic side of the membrane. Residues 82–106 (FICSLAVADMLVSVSNGSETIVITL) traverse the membrane as a helical segment. The Ca(2+) site is built by Glu-100, Asp-122, and Asp-126. The Extracellular segment spans residues 107–123 (LNSTDTDAQSFTVNIDN). The chain crosses the membrane as a helical span at residues 124–145 (VIDSVICSSLLASICSLLSIAV). Residues 146 to 165 (DRYFTIFYALQYHNIMTVKR) are Cytoplasmic-facing. Residues 166-186 (VGIIISCIWAVCTVSGVLFII) form a helical membrane-spanning segment. Over 187–191 (YSDSS) the chain is Extracellular. The chain crosses the membrane as a helical span at residues 192–215 (AVIICLITVFFTMLALMASLYVHM). The Cytoplasmic portion of the chain corresponds to 216-248 (FLMARLHIKRIAVLPGTGTIRQGANMKGAITLT). A helical membrane pass occupies residues 249 to 271 (ILIGVFVVCWAPFFLHLIFYISC). At 272 to 280 (PQNPYCVCF) the chain is on the extracellular side. A helical membrane pass occupies residues 281-304 (MSHFNLYLILIMCNSIIDPLIYAL). The Cytoplasmic portion of the chain corresponds to 305–332 (RSQELRKTFKEIICCYPLGGLCDLSSRY). Cys-318 carries the S-palmitoyl cysteine lipid modification.

This sequence belongs to the G-protein coupled receptor 1 family. In terms of assembly, homodimer; disulfide-linked, also forms higher order oligomers. Interacts with GNAS. Interacts with ATRNL1. Interacts with MGRN1; this interaction competes with GNAS-binding and thus inhibits agonist-induced cAMP production. Interacts with MRAP and MRAP2; these associated factors increase ligand-sensitivity and generation of cAMP.

The protein localises to the cell membrane. Functionally, hormone receptor that acts as a key component of the leptin-melanocortin pathway at the intersection of homeostatic maintenance of energetic state. Plays a role in regulating food intake: activation by a stimulating hormone such as anorexigenic alpha-melanocyte stimulating hormone (alpha-MSH) inhibits appetite, whereas binding to a natural antagonist like Agouti-related protein/AGRP promotes appetite. G-protein-coupled receptor that activates conventional Galphas signaling leading to induction of anorexogenic signaling in the hypothalamus to result in negative energy balance. Regulates the firing activity of neurons from the hypothalamus by alpha-MSH and AGRP independently of Galphas signaling by ligand-induced coupling of closure of inwardly rectifying potassium channel KCNJ13. In intestinal epithelial cells, plays a role in the inhibition of hepatic glucose production via nesfatin-1/NUCB2 leading to increased cyclic adenosine monophosphate (cAMP) levels and glucagon-like peptide 1 (GLP-1) secretion in the intestinal epithelium. The polypeptide is Melanocortin receptor 4 (MC4R) (Sus scrofa (Pig)).